The sequence spans 526 residues: Hyaluronidase-5 (526 aa).

The N-terminal stretch at 1 to 35 (MRVLYFKHSFFRSLLKSNGLPQTLLVFLLIPCYLT) is a signal peptide. Disulfide bonds link C60/C351, C223/C237, C376/C387, C381/C435, and C437/C443. E147 (proton donor) is an active-site residue. N-linked (GlcNAc...) asparagine glycosylation is found at N165 and N179.

It belongs to the glycosyl hydrolase 56 family. As to expression, expressed in testis, epididymal sperm and epididymides (at protein level). Expressed at highest levels in testis with lesser amounts in epididymal sperm.

The protein resides in the cell membrane. It localises to the cytoplasmic vesicle. Its subcellular location is the secretory vesicle. It is found in the acrosome membrane. The protein localises to the secreted. It catalyses the reaction Random hydrolysis of (1-&gt;4)-linkages between N-acetyl-beta-D-glucosamine and D-glucuronate residues in hyaluronate.. Its function is as follows. Catalyzes the hydrolysis of hyaluronan into smaller oligosaccharide fragments. Does not appear to be essential for fertilization. The chain is Hyaluronidase-5 from Mus musculus (Mouse).